Reading from the N-terminus, the 417-residue chain is Methyltransferase/ribosomally synthesized cyclic peptide dendrothelin A precursor dbihMA (417 aa).

The interval 1–251 (MESSTQTKPG…GVSTFYIPPK (251 aa)) is methyltransferase domain. Active-site residues include arginine 72, tyrosine 76, and tyrosine 98. Tyrosine 98, histidine 100, valine 103, alanine 130, glutamine 172, alanine 213, serine 244, and threonine 245 together coordinate S-adenosyl-L-methionine. Residues 252-378 (ARKDINTDII…WAIRCAMKNM (127 aa)) form a clasp domain region. The precursor leader stretch occupies residues 379-399 (PSSLLEAASQSVEEASMNGFP). N-methylvaline is present on residues valine 401 and valine 403. N-methylthreonine is present on threonine 404. Glycine 405 carries the N-methylglycine modification. Position 406 is an N-methylisoleucine (isoleucine 406). The residue at position 407 (valine 407) is an N-methylvaline. The residue at position 408 (glycine 408) is an N-methylglycine. Isoleucine 410 is modified (N-methylisoleucine). Residue glycine 411 is modified to N-methylglycine. N-methylvaline is present on valine 413.

In the N-terminal section; belongs to the precorrin methyltransferase family. In terms of assembly, homodimer. DbiMA automethylates at Val-401, Val-403, Thr-404, Gly-405, Ile-406, Val-407, Gly-408, Ile-410, Gly-411 and Val-413 before being processed by the prolyloligopeptidase dbiP which likely forms a peptidyl ester upon removal of the follower propeptide, which then undergoes macrocyclization with the N-terminus of the modified core peptide. Peptide backbone alpha-N-methylations change the physicochemical properties of amide bonds to provide structural constraints and other favorable characteristics including biological membrane permeability to peptides.

It functions in the pathway mycotoxin biosynthesis. Its function is as follows. Fusion protein of the methyltransferase dbiM and the dendrothelin core peptide; part of the gene cluster that mediates the biosynthesis of dendrothelin A, a highly methylated cyclic dodecapeptide showing slight nematodicidal activity. Dendrothelin A derives from the C-terminus of the dbiMA protein, and it is the dbiMA protein that methylates its own C-terminus using S-adenosyl methionine (SAM). The C-terminus is subsequently cleaved off and macrocyclized by the prolyloligopeptidase dbiP to give the final product. The protein is Methyltransferase/ribosomally synthesized cyclic peptide dendrothelin A precursor dbihMA of Dendrothele bispora (strain CBS 962.96).